A 430-amino-acid polypeptide reads, in one-letter code: Gamma-glutamyl phosphate reductase (430 aa).

This sequence belongs to the gamma-glutamyl phosphate reductase family.

Its subcellular location is the cytoplasm. The catalysed reaction is L-glutamate 5-semialdehyde + phosphate + NADP(+) = L-glutamyl 5-phosphate + NADPH + H(+). The protein operates within amino-acid biosynthesis; L-proline biosynthesis; L-glutamate 5-semialdehyde from L-glutamate: step 2/2. Catalyzes the NADPH-dependent reduction of L-glutamate 5-phosphate into L-glutamate 5-semialdehyde and phosphate. The product spontaneously undergoes cyclization to form 1-pyrroline-5-carboxylate. In Methylococcus capsulatus (strain ATCC 33009 / NCIMB 11132 / Bath), this protein is Gamma-glutamyl phosphate reductase.